We begin with the raw amino-acid sequence, 141 residues long: Nucleoside diphosphate kinase (141 aa).

ATP-binding residues include Lys11, Phe59, Arg87, Thr93, Arg104, and Asn114. His117 acts as the Pros-phosphohistidine intermediate in catalysis.

This sequence belongs to the NDK family. In terms of assembly, homotetramer. The cofactor is Mg(2+).

The protein resides in the cytoplasm. The enzyme catalyses a 2'-deoxyribonucleoside 5'-diphosphate + ATP = a 2'-deoxyribonucleoside 5'-triphosphate + ADP. It catalyses the reaction a ribonucleoside 5'-diphosphate + ATP = a ribonucleoside 5'-triphosphate + ADP. Its function is as follows. Major role in the synthesis of nucleoside triphosphates other than ATP. The ATP gamma phosphate is transferred to the NDP beta phosphate via a ping-pong mechanism, using a phosphorylated active-site intermediate. This Delftia acidovorans (strain DSM 14801 / SPH-1) protein is Nucleoside diphosphate kinase.